The sequence spans 91 residues: DNA-binding protein HU (91 aa).

Belongs to the bacterial histone-like protein family.

Its function is as follows. Histone-like DNA-binding protein which is capable of wrapping DNA to stabilize it, and thus to prevent its denaturation under extreme environmental conditions. Also seems to act as a fortuitous virulence factor in delayed sequelae by binding to heparan sulfate-proteoglycans in the extracellular matrix of target organs and acting as a nidus for in situ immune complex formation. In Streptococcus pyogenes serotype M1, this protein is DNA-binding protein HU (hup).